Reading from the N-terminus, the 597-residue chain is Formate--tetrahydrofolate ligase (597 aa).

Residue 84-91 participates in ATP binding; the sequence is TPLGEGKS.

Belongs to the formate--tetrahydrofolate ligase family.

It catalyses the reaction (6S)-5,6,7,8-tetrahydrofolate + formate + ATP = (6R)-10-formyltetrahydrofolate + ADP + phosphate. It functions in the pathway one-carbon metabolism; tetrahydrofolate interconversion. This is Formate--tetrahydrofolate ligase from Dehalococcoides mccartyi (strain ATCC BAA-2266 / KCTC 15142 / 195) (Dehalococcoides ethenogenes (strain 195)).